The following is a 477-amino-acid chain: Homospermidine synthase (477 aa).

Belongs to the saccharopine dehydrogenase family. Homodimer. Requires NAD(+) as cofactor.

It catalyses the reaction 2 putrescine = sym-homospermidine + NH4(+). The catalysed reaction is putrescine + spermidine = sym-homospermidine + propane-1,3-diamine. Involved in the NAD(+)-dependent synthesis of the polyamine homospermidine from putrescine. The polypeptide is Homospermidine synthase (hss) (Blastochloris viridis (Rhodopseudomonas viridis)).